The following is a 275-amino-acid chain: Ribosomal RNA small subunit methyltransferase A (275 aa).

6 residues coordinate S-adenosyl-L-methionine: Asn-28, Leu-30, Gly-55, Glu-77, Asp-103, and Asn-123.

Belongs to the class I-like SAM-binding methyltransferase superfamily. rRNA adenine N(6)-methyltransferase family. RsmA subfamily.

Its subcellular location is the cytoplasm. It catalyses the reaction adenosine(1518)/adenosine(1519) in 16S rRNA + 4 S-adenosyl-L-methionine = N(6)-dimethyladenosine(1518)/N(6)-dimethyladenosine(1519) in 16S rRNA + 4 S-adenosyl-L-homocysteine + 4 H(+). In terms of biological role, specifically dimethylates two adjacent adenosines (A1518 and A1519) in the loop of a conserved hairpin near the 3'-end of 16S rRNA in the 30S particle. May play a critical role in biogenesis of 30S subunits. The polypeptide is Ribosomal RNA small subunit methyltransferase A (Allorhizobium ampelinum (strain ATCC BAA-846 / DSM 112012 / S4) (Agrobacterium vitis (strain S4))).